The following is a 214-amino-acid chain: Pyridoxine/pyridoxamine 5'-phosphate oxidase (214 aa).

Residues Arg8 to Tyr11 and Lys66 each bind substrate. Residues Arg61–Lys66, Phe76–Thr77, Arg82, Lys83, and Gln105 contribute to the FMN site. Substrate-binding residues include Tyr123, Arg127, and Ser131. FMN is bound by residues Gln140–Ser141 and Trp184. Arg190–His192 contacts substrate. Arg194 provides a ligand contact to FMN.

It belongs to the pyridoxamine 5'-phosphate oxidase family. Homodimer. It depends on FMN as a cofactor.

The enzyme catalyses pyridoxamine 5'-phosphate + O2 + H2O = pyridoxal 5'-phosphate + H2O2 + NH4(+). It carries out the reaction pyridoxine 5'-phosphate + O2 = pyridoxal 5'-phosphate + H2O2. It functions in the pathway cofactor metabolism; pyridoxal 5'-phosphate salvage; pyridoxal 5'-phosphate from pyridoxamine 5'-phosphate: step 1/1. It participates in cofactor metabolism; pyridoxal 5'-phosphate salvage; pyridoxal 5'-phosphate from pyridoxine 5'-phosphate: step 1/1. In terms of biological role, catalyzes the oxidation of either pyridoxine 5'-phosphate (PNP) or pyridoxamine 5'-phosphate (PMP) into pyridoxal 5'-phosphate (PLP). This Burkholderia thailandensis (strain ATCC 700388 / DSM 13276 / CCUG 48851 / CIP 106301 / E264) protein is Pyridoxine/pyridoxamine 5'-phosphate oxidase.